The chain runs to 444 residues: Phosphoglucosamine mutase (444 aa).

The Phosphoserine intermediate role is filled by S102. Mg(2+) is bound by residues S102, D241, D243, and D245. The residue at position 102 (S102) is a Phosphoserine.

It belongs to the phosphohexose mutase family. It depends on Mg(2+) as a cofactor. Activated by phosphorylation.

It catalyses the reaction alpha-D-glucosamine 1-phosphate = D-glucosamine 6-phosphate. Functionally, catalyzes the conversion of glucosamine-6-phosphate to glucosamine-1-phosphate. This Buchnera aphidicola subsp. Acyrthosiphon pisum (strain 5A) protein is Phosphoglucosamine mutase.